Here is a 574-residue protein sequence, read N- to C-terminus: Golgin subfamily A member 6-like protein 4 (574 aa).

The segment covering 1–11 (MWPQPRFPPHP) has biased composition (pro residues). Disordered regions lie at residues 1 to 77 (MWPQ…YGEG) and 491 to 552 (KELK…AAGG). Positions 51–62 (NGSSPDTATSGG) are enriched in polar residues. A coiled-coil region spans residues 157–496 (SKVEQLQDET…EQQVKELKKS (340 aa)). Residues 491–504 (KELKKSGGAEEPRG) are compositionally biased toward basic and acidic residues. Residues 508–523 (AAAARPVAGAPVPQGA) are compositionally biased toward low complexity.

Belongs to the GOLGA6 family.

The protein is Golgin subfamily A member 6-like protein 4 (GOLGA6L4) of Homo sapiens (Human).